The chain runs to 177 residues: Large ribosomal subunit protein uL6 (177 aa).

It belongs to the universal ribosomal protein uL6 family. In terms of assembly, part of the 50S ribosomal subunit.

Its function is as follows. This protein binds to the 23S rRNA, and is important in its secondary structure. It is located near the subunit interface in the base of the L7/L12 stalk, and near the tRNA binding site of the peptidyltransferase center. The sequence is that of Large ribosomal subunit protein uL6 from Bartonella bacilliformis (strain ATCC 35685 / KC583 / Herrer 020/F12,63).